The following is a 1013-amino-acid chain: MGLGTLSPRMLVWLVASGIVFYGELWVCAGLDYDYTFDGNEEDKTETIDYKDPCKAAVFWGDIALDDEDLNIFQIDRTIDLTQNPFGNLGHTTGGLGDHAMSKKRGALYQLIDRIRRIGFGLEQNNTVKGKVPLQFSGQNEKNRVPRAATSRTERIWPGGVIPYVIGGNFTGSQRAMFKQAMRHWEKHTCVTFIERSDEESYIVFTYRPCGCCSYVGRRGNGPQAISIGKNCDKFGIVVHELGHVIGFWHEHTRPDRDNHVTIIRENIQPGQEYNFLKMEPGEVNSLGERYDFDSIMHYARNTFSRGMFLDTILPSRDDNGIRPAIGQRTRLSKGDIAQARKLYRCPACGETLQESNGNLSSPGFPNGYPSYTHCIWRVSVTPGEKIVLNFTTMDLYKSSLCWYDYIEVRDGYWRKSPLLGRFCGDKLPEVLTSTDSRMWIEFRSSSNWVGKGFAAVYEAICGGEIRKNEGQIQSPNYPDDYRPMKECVWKITVSESYHVGLTFQSFEIERHDNCAYDYLEVRDGTSENSPLIGRFCGYDKPEDIRSTSNTLWMKFVSDGTVNKAGFAANFFKEEDECAKPDRGGCEQRCLNTLGSYQCACEPGYELGPDRRSCEAACGGLLTKLNGTITTPGWPKEYPPNKNCVWQVVAPTQYRISVKFEFFELEGNEVCKYDYVEIWSGLSSESKLHGKFCGAEVPEVITSQFNNMRIEFKSDNTVSKKGFKAHFFSDKDECSKDNGGCQHECVNTMGSYMCQCRNGFVLHDNKHDCKEAECEQKIHSPSGLITSPNWPDKYPSRKECTWEISATPGHRIKLAFSEFEIEQHQECAYDHLEVFDGETEKSPILGRLCGNKIPDPLVATGNKMFVRFVSDASVQRKGFQATHSTECGGRLKAESKPRDLYSHAQFGDNNYPGQVDCEWLLVSERGSRLELSFQTFEVEEEADCGYDYVELFDGLDSTAVGLGRFCGSGPPEEIYSIGDSVLIHFHTDDTINKKGFHIRYKSIRYPDTTHTKK.

The N-terminal stretch at methionine 1–glycine 30 is a signal peptide. A propeptide spanning residues leucine 31–arginine 147 is cleaved from the precursor. The Peptidase M12A domain occupies alanine 148 to proline 347. N-linked (GlcNAc...) asparagine glycosylation is present at asparagine 169. 4 disulfides stabilise this stretch: cysteine 190–cysteine 346, cysteine 210–cysteine 232, cysteine 212–cysteine 213, and cysteine 349–cysteine 375. Histidine 240 serves as a coordination point for Zn(2+). Glutamate 241 is a catalytic residue. Residues histidine 244 and histidine 250 each contribute to the Zn(2+) site. CUB domains follow at residues cysteine 349 to isoleucine 461 and cysteine 462 to glutamate 574. Asparagine 359 and asparagine 390 each carry an N-linked (GlcNAc...) asparagine glycan. 15 disulfides stabilise this stretch: cysteine 402–cysteine 424, cysteine 462–cysteine 488, cysteine 515–cysteine 537, cysteine 578–cysteine 590, cysteine 586–cysteine 599, cysteine 601–cysteine 614, cysteine 618–cysteine 644, cysteine 671–cysteine 693, cysteine 734–cysteine 745, cysteine 741–cysteine 754, cysteine 756–cysteine 769, cysteine 774–cysteine 800, cysteine 827–cysteine 849, cysteine 887–cysteine 917, and cysteine 944–cysteine 966. One can recognise an EGF-like 1; calcium-binding domain in the interval glutamate 574–glutamate 615. The region spanning cysteine 618 to aspartate 730 is the CUB 3 domain. Residue asparagine 626 is glycosylated (N-linked (GlcNAc...) asparagine). The region spanning aspartate 730–lysine 770 is the EGF-like 2; calcium-binding domain. 2 CUB domains span residues cysteine 774 to glutamate 886 and cysteine 887 to isoleucine 1003.

Zn(2+) is required as a cofactor.

Its subcellular location is the secreted. Functionally, protease which processes procollagen C-propeptides, such as chordin, pro-biglycan and pro-lysyl oxidase. Required for the embryonic development. Predominant protease, which in the development, influences dorsal-ventral patterning and skeletogenesis. The chain is Tolloid-like protein 1 (TLL1) from Homo sapiens (Human).